The chain runs to 275 residues: Prohibitin-1 (275 aa).

The short motif at 106–109 (YQNL) is the AIM element.

Belongs to the prohibitin family. As to quaternary structure, the mitochondrial prohibitin complex consists of two subunits (PHB1 and PHB2). The subunits assemble into a membrane-associated ring-shaped supercomplex of approximately 1 mDa. Interacts with ATG24/SNX4; the interaction is direct and plays a role in mitophagy.

The protein resides in the mitochondrion inner membrane. Functionally, prohibitin probably acts as a holdase/unfoldase for the stabilization of newly synthesized mitochondrial proteins. Involved in mitophagy. Required for the switch to necrotrophic growth. In Colletotrichum higginsianum (strain IMI 349063) (Crucifer anthracnose fungus), this protein is Prohibitin-1.